A 466-amino-acid chain; its full sequence is Asparagine--tRNA ligase (466 aa).

The protein belongs to the class-II aminoacyl-tRNA synthetase family. In terms of assembly, homodimer.

The protein localises to the cytoplasm. The catalysed reaction is tRNA(Asn) + L-asparagine + ATP = L-asparaginyl-tRNA(Asn) + AMP + diphosphate + H(+). This Pectobacterium atrosepticum (strain SCRI 1043 / ATCC BAA-672) (Erwinia carotovora subsp. atroseptica) protein is Asparagine--tRNA ligase.